The chain runs to 647 residues: DNA mismatch repair protein MutL (647 aa).

It belongs to the DNA mismatch repair MutL/HexB family.

This protein is involved in the repair of mismatches in DNA. It is required for dam-dependent methyl-directed DNA mismatch repair. May act as a 'molecular matchmaker', a protein that promotes the formation of a stable complex between two or more DNA-binding proteins in an ATP-dependent manner without itself being part of a final effector complex. The polypeptide is DNA mismatch repair protein MutL (Koribacter versatilis (strain Ellin345)).